We begin with the raw amino-acid sequence, 535 residues long: Dual specificity calcium/calmodulin-dependent 3',5'-cyclic nucleotide phosphodiesterase 1B (535 aa).

The interval methionine 1 to glutamate 21 is disordered. Phosphoserine is present on residues serine 7 and serine 14. 2 calmodulin-binding regions span residues proline 26–glutamate 46 and glutamate 117–arginine 140. The PDEase domain maps to valine 145–glycine 502. The Proton donor role is filled by histidine 222. 4 residues coordinate Zn(2+): histidine 226, histidine 262, aspartate 263, and aspartate 369. Aspartate 263 is a binding site for Mg(2+). Disordered stretches follow at residues proline 445–asparagine 474 and tryptophan 495–aspartate 535. The span at lysine 454–glutamine 463 shows a compositional bias: polar residues. Serine 465 and serine 513 each carry phosphoserine.

It belongs to the cyclic nucleotide phosphodiesterase family. PDE1 subfamily. Homodimer. Requires Zn(2+) as cofactor. Mg(2+) serves as cofactor.

The protein resides in the cytoplasm. It localises to the cytosol. It carries out the reaction a nucleoside 3',5'-cyclic phosphate + H2O = a nucleoside 5'-phosphate + H(+). It catalyses the reaction 3',5'-cyclic GMP + H2O = GMP + H(+). The catalysed reaction is 3',5'-cyclic AMP + H2O = AMP + H(+). Its activity is regulated as follows. Type I PDE are activated by the binding of calmodulin in the presence of Ca(2+). In terms of biological role, cyclic nucleotide phosphodiesterase with a dual specificity for the second messengers cAMP and cGMP, which are key regulators of many important physiological processes. Has a preference for cGMP as a substrate. In Cricetulus griseus (Chinese hamster), this protein is Dual specificity calcium/calmodulin-dependent 3',5'-cyclic nucleotide phosphodiesterase 1B.